Consider the following 423-residue polypeptide: Myb-like protein G (423 aa).

Residues 36–90 (TISKQRENWTDEEHQKFLEALTLFDRDWKKIESFVGSKTVIQIRSHAQKYFIKVQ) enclose the HTH myb-type domain. The H-T-H motif DNA-binding region spans 63–86 (WKKIESFVGSKTVIQIRSHAQKYF). Disordered stretches follow at residues 93 to 116 (NTGERIPPPRPKRKSIQPYPQKQK), 177 to 205 (QQAVTTAQSSQRNGGLPPNPSSNNGGTTL), and 284 to 372 (ISPR…LGNY). Positions 177–202 (QQAVTTAQSSQRNGGLPPNPSSNNGG) are enriched in low complexity. The segment covering 286–295 (PRNSTGNINV) has biased composition (polar residues). A compositionally biased stretch (low complexity) spans 302–354 (NNSNNNNNNNNNNNNNNNNNNNNNNNNNNNNNNNNNNNNNNNNNNNNNNNNNN). Residues 361 to 372 (QNHSNMVNLGNY) are compositionally biased toward polar residues.

The protein resides in the nucleus. The chain is Myb-like protein G (mybG) from Dictyostelium discoideum (Social amoeba).